Reading from the N-terminus, the 112-residue chain is Cuticle protein AM1239 (112 aa).

One can recognise a Chitin-binding type R&amp;R domain in the interval 16 to 85 (DGNFNYRFET…FIPTDHPLPA (70 aa)). Threonine 79 is a glycosylation site (O-linked (HexNAc) threonine).

In terms of tissue distribution, arthrodial membrane.

The chain is Cuticle protein AM1239 from Cancer pagurus (Rock crab).